The following is a 391-amino-acid chain: cAMP-dependent protein kinase regulatory subunit (391 aa).

Residues 1–84 (MFKSPFGANA…PPNPESYPAQ (84 aa)) form a disordered region. The segment at 1–131 (MFKSPFGANA…RLKTAIAGNF (131 aa)) is dimerization and phosphorylation. Polar residues predominate over residues 38-55 (TVTSPTSPNFGMNAQSMF). Ser-92 bears the Phosphoserine mark. 3',5'-cyclic AMP-binding positions include 132–261 (LFSH…FLRE), Glu-210, Arg-219, 264–381 (LLQT…DIKT), Glu-331, and Arg-340.

The protein belongs to the cAMP-dependent kinase regulatory chain family. Tetramer, composed of 2 regulatory (R) and 2 catalytic (C) subunits. In the presence of cAMP it dissociates into 2 active monomeric C subunits and an R dimer.

The chain is cAMP-dependent protein kinase regulatory subunit (PKAR) from Colletotrichum orbiculare (strain 104-T / ATCC 96160 / CBS 514.97 / LARS 414 / MAFF 240422) (Cucumber anthracnose fungus).